Here is a 132-residue protein sequence, read N- to C-terminus: MWNEFKKFALKGNVMDLAVGVVIGGAFGKIVSSLVSDVIMPLVGLLLGGVNFTGLSFTFGKAVVKYGAFIQTVVDFLIIAFSIFLFIKLFNKLTFKKEEEKKEEVPEPTKEEVLLGEIRDLLKQQNASKDRA.

3 helical membrane-spanning segments follow: residues 8 to 28, 30 to 50, and 67 to 87; these read FALKGNVMDLAVGVVIGGAFG, IVSSLVSDVIMPLVGLLLGGV, and GAFIQTVVDFLIIAFSIFLFI.

The protein belongs to the MscL family. As to quaternary structure, homopentamer.

Its subcellular location is the cell membrane. Functionally, channel that opens in response to stretch forces in the membrane lipid bilayer. May participate in the regulation of osmotic pressure changes within the cell. The polypeptide is Large-conductance mechanosensitive channel (Bacillus cytotoxicus (strain DSM 22905 / CIP 110041 / 391-98 / NVH 391-98)).